A 122-amino-acid chain; its full sequence is Large ribosomal subunit protein uL18 (122 aa).

It belongs to the universal ribosomal protein uL18 family. Part of the 50S ribosomal subunit; part of the 5S rRNA/L5/L18/L25 subcomplex. Contacts the 5S and 23S rRNAs.

In terms of biological role, this is one of the proteins that bind and probably mediate the attachment of the 5S RNA into the large ribosomal subunit, where it forms part of the central protuberance. The chain is Large ribosomal subunit protein uL18 from Prochlorococcus marinus (strain MIT 9515).